The chain runs to 162 residues: Protein A49 (162 aa).

It belongs to the poxviridae A49 protein family.

This is Protein A49 from Variola virus (isolate Human/India/Ind3/1967) (VARV).